Consider the following 195-residue polypeptide: Group XIIB secretory phospholipase A2-like protein (195 aa).

A signal peptide spans 1 to 19 (MKLLCGFFLLWLGLVGNLA). 4 residues coordinate Ca(2+): S89, Y91, L93, and D116.

This sequence belongs to the phospholipase A2 family. The cofactor is Ca(2+).

The protein localises to the secreted. Functionally, not known; does not seem to have catalytic activity. The sequence is that of Group XIIB secretory phospholipase A2-like protein (Pla2g12b) from Mus musculus (Mouse).